Reading from the N-terminus, the 462-residue chain is Putative amidase AmiB2 (462 aa).

Active-site charge relay system residues include K81 and S155. Catalysis depends on S179, which acts as the Acyl-ester intermediate.

This sequence belongs to the amidase family.

It catalyses the reaction a monocarboxylic acid amide + H2O = a monocarboxylate + NH4(+). The sequence is that of Putative amidase AmiB2 (amiB2) from Mycobacterium bovis (strain ATCC BAA-935 / AF2122/97).